Consider the following 259-residue polypeptide: Proteasome assembly chaperone 2 (259 aa).

Belongs to the PSMG2 family. Forms a heterodimer with psmg1. Post-translationally, degraded by the proteasome upon completion of 20S proteasome maturation.

It localises to the nucleus. In terms of biological role, chaperone protein which promotes assembly of the 20S proteasome as part of a heterodimer with psmg1. The sequence is that of Proteasome assembly chaperone 2 from Xenopus laevis (African clawed frog).